A 208-amino-acid polypeptide reads, in one-letter code: Ribosomal RNA small subunit methyltransferase G (208 aa).

S-adenosyl-L-methionine contacts are provided by residues glycine 78, phenylalanine 83, 101-103 (ERS), 129-130 (IE), and arginine 142.

This sequence belongs to the methyltransferase superfamily. RNA methyltransferase RsmG family.

It is found in the cytoplasm. Its function is as follows. Specifically methylates the N7 position of a guanine in 16S rRNA. The sequence is that of Ribosomal RNA small subunit methyltransferase G from Borrelia garinii subsp. bavariensis (strain ATCC BAA-2496 / DSM 23469 / PBi) (Borreliella bavariensis).